A 355-amino-acid chain; its full sequence is uncharacterized protein (355 aa).

The N-terminal stretch at 1 to 21 (MQKKVLFNDIVFVCFPITDNG) is a signal peptide. N-linked (GlcNAc...) asparagine; by host glycans are attached at residues N20, N78, N87, N156, N159, and N274. Residues 22–331 (SIIISDIGYS…SSTSFFSRYG (310 aa)) are Virion surface-facing. Residues 288-317 (GSKSTPNGPNGPTPTPSNGPNGPTPVPGIP) are disordered. The span at 296-317 (PNGPTPTPSNGPNGPTPVPGIP) shows a compositional bias: pro residues. N-linked (GlcNAc...) asparagine; by host glycosylation occurs at N320. Residues 332–352 (LWIIIAIILLIVIISAVGIYF) traverse the membrane as a helical segment. At 353 to 355 (YLR) the chain is on the intravirion side.

It localises to the host membrane. The protein localises to the virion. This is an uncharacterized protein from Acanthamoeba polyphaga mimivirus (APMV).